A 276-amino-acid chain; its full sequence is NH(3)-dependent NAD(+) synthetase (276 aa).

Residue 43–50 (GISGGVDS) participates in ATP binding. Position 49 (D49) interacts with Mg(2+). Position 146 (R146) interacts with deamido-NAD(+). T166 provides a ligand contact to ATP. E171 lines the Mg(2+) pocket. Residues K179 and D186 each contribute to the deamido-NAD(+) site. ATP-binding residues include K195 and T217. 266-267 (HK) contributes to the deamido-NAD(+) binding site.

It belongs to the NAD synthetase family. As to quaternary structure, homodimer.

It catalyses the reaction deamido-NAD(+) + NH4(+) + ATP = AMP + diphosphate + NAD(+) + H(+). It functions in the pathway cofactor biosynthesis; NAD(+) biosynthesis; NAD(+) from deamido-NAD(+) (ammonia route): step 1/1. Functionally, catalyzes the ATP-dependent amidation of deamido-NAD to form NAD. Uses ammonia as a nitrogen source. In Vibrio vulnificus (strain YJ016), this protein is NH(3)-dependent NAD(+) synthetase.